The chain runs to 350 residues: Probable dual-specificity RNA methyltransferase RlmN (350 aa).

The Proton acceptor role is filled by E93. A Radical SAM core domain is found at 99 to 327 (SSKRLTVCVS…VSVRYSRGVQ (229 aa)). Residues C106 and C332 are joined by a disulfide bond. Residues C113, C117, and C120 each coordinate [4Fe-4S] cluster. Residues 160–161 (GE), S190, 213–215 (SLH), and N289 each bind S-adenosyl-L-methionine. The active-site S-methylcysteine intermediate is the C332.

The protein belongs to the radical SAM superfamily. RlmN family. It depends on [4Fe-4S] cluster as a cofactor.

The protein resides in the cytoplasm. The catalysed reaction is adenosine(2503) in 23S rRNA + 2 reduced [2Fe-2S]-[ferredoxin] + 2 S-adenosyl-L-methionine = 2-methyladenosine(2503) in 23S rRNA + 5'-deoxyadenosine + L-methionine + 2 oxidized [2Fe-2S]-[ferredoxin] + S-adenosyl-L-homocysteine. It catalyses the reaction adenosine(37) in tRNA + 2 reduced [2Fe-2S]-[ferredoxin] + 2 S-adenosyl-L-methionine = 2-methyladenosine(37) in tRNA + 5'-deoxyadenosine + L-methionine + 2 oxidized [2Fe-2S]-[ferredoxin] + S-adenosyl-L-homocysteine. Specifically methylates position 2 of adenine 2503 in 23S rRNA and position 2 of adenine 37 in tRNAs. The protein is Probable dual-specificity RNA methyltransferase RlmN of Synechocystis sp. (strain ATCC 27184 / PCC 6803 / Kazusa).